The sequence spans 390 residues: Pyruvate dehydrogenase E1 component subunit alpha, somatic form, mitochondrial (390 aa).

The N-terminal 29 residues, 1 to 29 (MRKMLAAVSRVLSGASQKPASRVLVASRN), are a transit peptide targeting the mitochondrion. Lys63 carries the N6-acetyllysine; alternate modification. At Lys63 the chain carries N6-succinyllysine; alternate. Positions 92, 118, 119, 157, 165, 167, 196, 197, 198, 225, and 227 each coordinate pyruvate. The thiamine diphosphate site is built by Tyr118 and Arg119. Gly165, Val167, Asp196, Gly197, Ala198, and Asn225 together coordinate thiamine diphosphate. Asp196 lines the Mg(2+) pocket. Residues Asn225 and Tyr227 each contribute to the Mg(2+) site. Ser232 carries the phosphoserine; by PDK1 modification. Lys244 is modified (N6-acetyllysine; alternate). An N6-succinyllysine; alternate modification is found at Lys244. Lys277 is modified (N6-succinyllysine). Residue His292 coordinates thiamine diphosphate. Phosphoserine; by PDK1, PDK2, PDK3 and PDK4 is present on Ser293. The residue at position 295 (Ser295) is a Phosphoserine. Phosphoserine; by PDK1, PDK2, PDK3 and PDK4 is present on Ser300. The residue at position 301 (Tyr301) is a Phosphotyrosine. At Lys313 the chain carries N6-acetyllysine; alternate. Lys313 is modified (N6-succinyllysine; alternate). Lys321 and Lys336 each carry N6-acetyllysine. An N6-succinyllysine modification is found at Lys385.

As to quaternary structure, heterotetramer of two PDHA1 and two PDHB subunits. The heterotetramer interacts with DLAT, and is part of the multimeric pyruvate dehydrogenase complex that contains multiple copies of pyruvate dehydrogenase (E1), dihydrolipoamide acetyltransferase (DLAT, E2) and lipoamide dehydrogenase (DLD, E3). These subunits are bound to an inner core composed of about 48 DLAT and 12 PDHX molecules. Requires thiamine diphosphate as cofactor. The cofactor is Mg(2+). In terms of processing, phosphorylation at Ser-232, Ser-293 and Ser-300 by PDK family kinases inactivates the enzyme; for this phosphorylation at a single site is sufficient. Dephosphorylation at all three sites, i.e. at Ser-232, Ser-293 and Ser-300, is required for reactivation. Acetylation alters the phosphorylation pattern. Deacetylated by SIRT3. Ubiquitous.

The protein localises to the mitochondrion matrix. The enzyme catalyses N(6)-[(R)-lipoyl]-L-lysyl-[protein] + pyruvate + H(+) = N(6)-[(R)-S(8)-acetyldihydrolipoyl]-L-lysyl-[protein] + CO2. Pyruvate dehydrogenase activity is inhibited by phosphorylation of PDHA1; it is reactivated by dephosphorylation. Functionally, the pyruvate dehydrogenase complex catalyzes the overall conversion of pyruvate to acetyl-CoA and CO(2), and thereby links the glycolytic pathway to the tricarboxylic cycle. The polypeptide is Pyruvate dehydrogenase E1 component subunit alpha, somatic form, mitochondrial (PDHA1) (Homo sapiens (Human)).